Reading from the N-terminus, the 206-residue chain is Probable GTP-binding protein EngB (206 aa).

The 173-residue stretch at 29–201 folds into the EngB-type G domain; sequence ILPEVAVVGR…MIMIQDALND (173 aa). GTP contacts are provided by residues 37 to 44, 64 to 68, 82 to 85, 149 to 152, and 180 to 182; these read GRSNVGKS, GKTQA, DLPG, TKID, and YSV. Residues S44 and T66 each contribute to the Mg(2+) site.

It belongs to the TRAFAC class TrmE-Era-EngA-EngB-Septin-like GTPase superfamily. EngB GTPase family. Mg(2+) is required as a cofactor.

Its function is as follows. Necessary for normal cell division and for the maintenance of normal septation. In Protochlamydia amoebophila (strain UWE25), this protein is Probable GTP-binding protein EngB.